Consider the following 47-residue polypeptide: Defensin-like protein 1 (47 aa).

4 cysteine pairs are disulfide-bonded: Cys-3-Cys-47, Cys-14-Cys-34, Cys-20-Cys-41, and Cys-24-Cys-43.

Monomer and homodimer.

Inhibits trypsin but not chymotrypsin. The chain is Defensin-like protein 1 from Vigna unguiculata (Cowpea).